A 444-amino-acid polypeptide reads, in one-letter code: Trigger factor (444 aa).

The PPIase FKBP-type domain occupies 163-248; it reads GDFLTVDFVG…AKALKKAVAP (86 aa).

This sequence belongs to the FKBP-type PPIase family. Tig subfamily.

The protein localises to the cytoplasm. It carries out the reaction [protein]-peptidylproline (omega=180) = [protein]-peptidylproline (omega=0). Functionally, involved in protein export. Acts as a chaperone by maintaining the newly synthesized protein in an open conformation. Functions as a peptidyl-prolyl cis-trans isomerase. In Granulibacter bethesdensis (strain ATCC BAA-1260 / CGDNIH1), this protein is Trigger factor.